Reading from the N-terminus, the 325-residue chain is Glutarate 2-hydroxylase (325 aa).

The Fe cation site is built by His160, Asp162, and His292.

Belongs to the glutarate hydroxylase family. As to quaternary structure, homotetramer. It depends on Fe(2+) as a cofactor.

The enzyme catalyses glutarate + 2-oxoglutarate + O2 = (S)-2-hydroxyglutarate + succinate + CO2. Its pathway is amino-acid degradation. Acts as an alpha-ketoglutarate-dependent dioxygenase catalyzing hydroxylation of glutarate (GA) to L-2-hydroxyglutarate (L2HG). Functions in a L-lysine degradation pathway that proceeds via cadaverine, glutarate and L-2-hydroxyglutarate. The sequence is that of Glutarate 2-hydroxylase from Pseudomonas putida (strain ATCC 700007 / DSM 6899 / JCM 31910 / BCRC 17059 / LMG 24140 / F1).